The primary structure comprises 335 residues: MTEIATTSGARSVGLLSVGAYRPERVVTNDEICQHIDSSDEWIYTRTGIKTRRFAADDESAASMATEACRRALSNAGLSAADIDGVIVTTNTHFLQTPPAAPMVAASLGAKGILGFDLSAGCAGFGYALGAAADMIRGGGAATMLVVGTEKLSPTIDMYDRGNCFIFADGAAAVVVGETPFQGIGPTVAGSDGEQADAIRQDIDWITFAQNPSGPRPFVRLEGPAVFRWAAFKMGDVGRRAMDAAGVRPDQIDVFVPHQANSRINELLVKNLQLRPDAVVANDIEHTGNTSAASIPLAMAELLTTGAAKPGDLALLIGYGAGLSYAAQVVRMPKG.

Catalysis depends on residues Cys-122 and His-258. An ACP-binding region spans residues 259–263 (QANSR). Residue Asn-289 is part of the active site.

Belongs to the thiolase-like superfamily. FabH family. As to quaternary structure, homodimer.

The protein localises to the cytoplasm. It catalyses the reaction malonyl-[ACP] + dodecanoyl-CoA + H(+) = 3-oxotetradecanoyl-[ACP] + CO2 + CoA. It participates in lipid metabolism; fatty acid biosynthesis. The protein operates within lipid metabolism; mycolic acid biosynthesis. In terms of biological role, catalyzes the condensation reaction of fatty acid synthesis by the addition to an acyl acceptor of two carbons from malonyl-ACP. Catalyzes the first condensation reaction which initiates fatty acid synthesis and may therefore play a role in governing the total rate of fatty acid production. Possesses both acetoacetyl-ACP synthase and acetyl transacylase activities. Its substrate specificity determines the biosynthesis of branched-chain and/or straight-chain of fatty acids. The protein is Mycobacterial beta-ketoacyl-[acyl-carrier-protein] synthase III of Mycobacterium bovis (strain ATCC BAA-935 / AF2122/97).